Consider the following 262-residue polypeptide: Hydroxyethylthiazole kinase (262 aa).

Met-40 contributes to the substrate binding site. ATP-binding residues include Lys-116 and Thr-162. Gly-189 serves as a coordination point for substrate.

The protein belongs to the Thz kinase family. Mg(2+) is required as a cofactor.

It catalyses the reaction 5-(2-hydroxyethyl)-4-methylthiazole + ATP = 4-methyl-5-(2-phosphooxyethyl)-thiazole + ADP + H(+). It participates in cofactor biosynthesis; thiamine diphosphate biosynthesis; 4-methyl-5-(2-phosphoethyl)-thiazole from 5-(2-hydroxyethyl)-4-methylthiazole: step 1/1. In terms of biological role, catalyzes the phosphorylation of the hydroxyl group of 4-methyl-5-beta-hydroxyethylthiazole (THZ). This Clostridioides difficile (strain 630) (Peptoclostridium difficile) protein is Hydroxyethylthiazole kinase.